The following is a 160-amino-acid chain: Ribosome maturation factor RimP (160 aa).

The protein belongs to the RimP family.

The protein resides in the cytoplasm. Functionally, required for maturation of 30S ribosomal subunits. In Orientia tsutsugamushi (strain Ikeda) (Rickettsia tsutsugamushi), this protein is Ribosome maturation factor RimP.